Consider the following 358-residue polypeptide: Isopentenyl-diphosphate delta-isomerase (358 aa).

A substrate-binding site is contributed by 12 to 13 (RK). Residues 69 to 71 (AMT), S99, and N128 each bind FMN. Q158 serves as a coordination point for substrate. E159 provides a ligand contact to Mg(2+). FMN is bound by residues K190, T220, 267-269 (GIR), and 288-289 (AG).

It belongs to the IPP isomerase type 2 family. In terms of assembly, homooctamer. Dimer of tetramers. FMN is required as a cofactor. Requires NADPH as cofactor. The cofactor is Mg(2+).

Its subcellular location is the cytoplasm. It carries out the reaction isopentenyl diphosphate = dimethylallyl diphosphate. In terms of biological role, involved in the biosynthesis of isoprenoids. Catalyzes the 1,3-allylic rearrangement of the homoallylic substrate isopentenyl (IPP) to its allylic isomer, dimethylallyl diphosphate (DMAPP). The protein is Isopentenyl-diphosphate delta-isomerase of Listeria monocytogenes serotype 4b (strain F2365).